The primary structure comprises 148 residues: UPF0756 membrane protein NGK_2061 (148 aa).

4 helical membrane passes run 10 to 32 (LVTL…ATIL), 50 to 70 (HGLN…LVSG), 85 to 105 (MISA…GVPL), and 116 to 136 (LLIG…GPLI).

This sequence belongs to the UPF0756 family.

It localises to the cell membrane. In Neisseria gonorrhoeae (strain NCCP11945), this protein is UPF0756 membrane protein NGK_2061.